We begin with the raw amino-acid sequence, 403 residues long: Guanine nucleotide-binding protein alpha-8 subunit (403 aa).

A lipid anchor (N-myristoyl glycine) is attached at Gly-2. Cys-3 carries the S-palmitoyl cysteine lipid modification. In terms of domain architecture, G-alpha spans 31-356; the sequence is LDFRILLLGA…KVLMKATKDL (326 aa). Positions 34 to 47 are G1 motif; that stretch reads RILLLGAGESGKST. Residues 39-46, 174-180, 199-203, 268-271, and Ala-324 each bind GTP; these read GAGESGKS, IMTRVRT, DVGGQ, and NKKD. The Mg(2+) site is built by Ser-46 and Thr-180. Residues 172 to 180 are G2 motif; sequence DCIMTRVRT. Positions 195–204 are G3 motif; sequence FRVVDVGGQR. The segment at 264–271 is G4 motif; that stretch reads FLVLNKKD. The G5 motif stretch occupies residues 322 to 327; it reads IAARYK. A disordered region spans residues 353–403; the sequence is TKDLKKSSKQSSKSSLGNSTQNNSNNNNNNNNSNNNNGQTTIDGATAKINS. A compositionally biased stretch (low complexity) spans 374–389; it reads NNSNNNNNNNNSNNNN. The segment covering 390-403 has biased composition (polar residues); that stretch reads GQTTIDGATAKINS.

It belongs to the G-alpha family. G proteins are composed of 3 units; alpha, beta and gamma. The alpha chain contains the guanine nucleotide binding site.

In terms of biological role, guanine nucleotide-binding proteins (G proteins) are involved as modulators or transducers in various transmembrane signaling systems. G alpha-8 is a potential analog for the G(s)-like G-proteins which stimulate adenylate cyclase in mammals. The chain is Guanine nucleotide-binding protein alpha-8 subunit (gpaH) from Dictyostelium discoideum (Social amoeba).